The chain runs to 121 residues: Two-component response regulator ORR13 (121 aa).

One can recognise a Response regulatory domain in the interval 5 to 121 (HVLVVDDTHV…ADVPRILNYI (117 aa)). Asp55 bears the 4-aspartylphosphate mark.

Belongs to the ARR family. Type-A subfamily. Post-translationally, two-component system major event consists of a His-to-Asp phosphorelay between a sensor histidine kinase (HK) and a response regulator (RR). In plants, the His-to-Asp phosphorelay involves an additional intermediate named Histidine-containing phosphotransfer protein (HPt). This multistep phosphorelay consists of a His-Asp-His-Asp sequential transfer of a phosphate group between first a His and an Asp of the HK protein, followed by the transfer to a conserved His of the HPt protein and finally the transfer to an Asp in the receiver domain of the RR protein. Expressed in flowers and panicles.

In terms of biological role, functions as a response regulator involved in His-to-Asp phosphorelay signal transduction system. Phosphorylation of the Asp residue in the receiver domain activates the ability of the protein to promote the transcription of target genes. Type-A response regulators seem to act as negative regulators of the cytokinin signaling. The sequence is that of Two-component response regulator ORR13 from Oryza sativa subsp. japonica (Rice).